We begin with the raw amino-acid sequence, 285 residues long: Bifunctional protein FolD (285 aa).

NADP(+) contacts are provided by residues 165-167 and serine 190; that span reads GRS.

The protein belongs to the tetrahydrofolate dehydrogenase/cyclohydrolase family. Homodimer.

It carries out the reaction (6R)-5,10-methylene-5,6,7,8-tetrahydrofolate + NADP(+) = (6R)-5,10-methenyltetrahydrofolate + NADPH. The enzyme catalyses (6R)-5,10-methenyltetrahydrofolate + H2O = (6R)-10-formyltetrahydrofolate + H(+). The protein operates within one-carbon metabolism; tetrahydrofolate interconversion. Catalyzes the oxidation of 5,10-methylenetetrahydrofolate to 5,10-methenyltetrahydrofolate and then the hydrolysis of 5,10-methenyltetrahydrofolate to 10-formyltetrahydrofolate. This is Bifunctional protein FolD from Burkholderia ambifaria (strain ATCC BAA-244 / DSM 16087 / CCUG 44356 / LMG 19182 / AMMD) (Burkholderia cepacia (strain AMMD)).